The primary structure comprises 118 residues: Large ribosomal subunit protein bL19 (118 aa).

The protein belongs to the bacterial ribosomal protein bL19 family.

This protein is located at the 30S-50S ribosomal subunit interface and may play a role in the structure and function of the aminoacyl-tRNA binding site. This Wolinella succinogenes (strain ATCC 29543 / DSM 1740 / CCUG 13145 / JCM 31913 / LMG 7466 / NCTC 11488 / FDC 602W) (Vibrio succinogenes) protein is Large ribosomal subunit protein bL19.